A 152-amino-acid chain; its full sequence is MKRDKRLEIIKEIVTNNKISTQEELQSLLLERGVEVTQATLSRDIRKLNIIKKRDKGESFYSFLTSGNSKINSDLQLYFYNFVISAKSVGALVVIRTKLGEADVLANALDDERDSRTDILGTIAGADTLLVICASEKAANILTAEIKYILLG.

The protein belongs to the ArgR family.

The protein resides in the cytoplasm. It participates in amino-acid biosynthesis; L-arginine biosynthesis [regulation]. In terms of biological role, regulates arginine biosynthesis genes. The chain is Arginine repressor from Lactococcus lactis subsp. lactis (strain IL1403) (Streptococcus lactis).